Consider the following 216-residue polypeptide: Small ribosomal subunit protein uS5 (216 aa).

The S5 DRBM domain occupies L51–V114.

It belongs to the universal ribosomal protein uS5 family. As to quaternary structure, part of the 30S ribosomal subunit. Contacts protein S4.

In terms of biological role, with S4 and S12 plays an important role in translational accuracy. The sequence is that of Small ribosomal subunit protein uS5 from Methanothermobacter thermautotrophicus (strain ATCC 29096 / DSM 1053 / JCM 10044 / NBRC 100330 / Delta H) (Methanobacterium thermoautotrophicum).